The chain runs to 377 residues: Cytochrome b (377 aa).

4 consecutive transmembrane segments (helical) span residues 33–53, 77–98, 113–133, and 178–198; these read FGSL…FLAM, WLIR…YLHT, WTMG…GYVL, and FFMI…VHLL. Heme b contacts are provided by His83 and His97. Residues His182 and His196 each contribute to the heme b site. Position 201 (His201) interacts with a ubiquinone. Helical transmembrane passes span 226 to 246, 288 to 308, 320 to 340, and 347 to 367; these read YKDL…SLLS, LGGV…PLSS, FNQI…WIGA, and FIIM…LNPM.

The protein belongs to the cytochrome b family. As to quaternary structure, the main subunits of complex b-c1 are: cytochrome b, cytochrome c1 and the Rieske protein. The cofactor is heme b.

The protein localises to the mitochondrion inner membrane. Its function is as follows. Component of the ubiquinol-cytochrome c reductase complex (complex III or cytochrome b-c1 complex) that is part of the mitochondrial respiratory chain. The b-c1 complex mediates electron transfer from ubiquinol to cytochrome c. Contributes to the generation of a proton gradient across the mitochondrial membrane that is then used for ATP synthesis. The chain is Cytochrome b (MT-CYB) from Tetrodontophora bielanensis (Giant springtail).